Reading from the N-terminus, the 344-residue chain is Bifunctional trans-3-hydroxy-L-proline dehydratase/2-epimerase (344 aa).

Ser90 acts as the Proton acceptor in catalysis. Substrate contacts are provided by residues 91-92, Asp252, and 257-258; these read GS and GT.

It belongs to the proline racemase family.

It carries out the reaction trans-3-hydroxy-L-proline = 1-pyrroline-2-carboxylate + H2O. It catalyses the reaction trans-3-hydroxy-L-proline = cis-3-hydroxy-D-proline. In terms of biological role, bifunctional enzyme catalyzing both the dehydration of trans-3-hydroxy-L-proline (t3LHyp) to Delta(1)-pyrroline-2-carboxylate (Pyr2C) and 2-epimerization of t3LHyp to cis-3-hydroxy-D-proline (c3DHyp). No dehydratase activity with L-proline, trans-4-hydroxy-L-proline (t4LHyp), cis-4-hydroxy-L-proline (c4LHyp), D-proline, cis-4-hydroxy-D-proline (c4DHyp), trans-4-hydroxy-D-proline (t4DHyp) or L-serine as substrates. Displays neither t4LHyp epimerase nor proline racemase activity. Is likely involved in a degradation pathway that converts t3LHyp to L-proline, which would allow P.aeruginosa to grow on t3LHyp as a sole carbon source. The protein is Bifunctional trans-3-hydroxy-L-proline dehydratase/2-epimerase of Pseudomonas aeruginosa (strain ATCC 15692 / DSM 22644 / CIP 104116 / JCM 14847 / LMG 12228 / 1C / PRS 101 / PAO1).